The following is a 257-amino-acid chain: Phosphate import ATP-binding protein PstB (257 aa).

Positions 11-252 (IQVRDLNFYY…PAKKQTEDYI (242 aa)) constitute an ABC transporter domain. 43–50 (GPSGSGKS) lines the ATP pocket.

The protein belongs to the ABC transporter superfamily. Phosphate importer (TC 3.A.1.7) family. The complex is composed of two ATP-binding proteins (PstB), two transmembrane proteins (PstC and PstA) and a solute-binding protein (PstS).

It localises to the cell inner membrane. The catalysed reaction is phosphate(out) + ATP + H2O = ADP + 2 phosphate(in) + H(+). Part of the ABC transporter complex PstSACB involved in phosphate import. Responsible for energy coupling to the transport system. The polypeptide is Phosphate import ATP-binding protein PstB (Salmonella choleraesuis (strain SC-B67)).